The following is a 507-amino-acid chain: RNA-splicing ligase RtcB homolog (507 aa).

5 residues coordinate Mn(2+): Asp-121, Cys-124, His-229, His-261, and His-355. 228–232 (NHYAE) contacts GMP. Residues 355–356 (HN), 404–407 (GGTM), Ser-411, 430–433 (HGAG), and Lys-506 each bind GMP. His-430 (GMP-histidine intermediate) is an active-site residue.

The protein belongs to the RtcB family. Catalytic component of the tRNA-splicing ligase complex. Mn(2+) serves as cofactor.

It catalyses the reaction a 3'-end 3'-phospho-ribonucleotide-RNA + a 5'-end dephospho-ribonucleoside-RNA + GTP = a ribonucleotidyl-ribonucleotide-RNA + GMP + diphosphate. The enzyme catalyses a 3'-end 2',3'-cyclophospho-ribonucleotide-RNA + a 5'-end dephospho-ribonucleoside-RNA + GTP + H2O = a ribonucleotidyl-ribonucleotide-RNA + GMP + diphosphate + H(+). Its function is as follows. Catalytic subunit of the tRNA-splicing ligase complex that acts by directly joining spliced tRNA halves to mature-sized tRNAs by incorporating the precursor-derived splice junction phosphate into the mature tRNA as a canonical 3',5'-phosphodiester. May act as an RNA ligase with broad substrate specificity, and may function toward other RNAs. The chain is RNA-splicing ligase RtcB homolog from Branchiostoma floridae (Florida lancelet).